A 1086-amino-acid chain; its full sequence is MANLLKTVVTGCSCPLLSNLGSCKGLRVKKDFLRTFYTHQELWCKAPVKPGIPYKQLTVGVPKEIFQNEKRVALSPAGVQNLVKQGFNVVVESGAGEASKFSDDHYRVAGAQIQGAKEVLASDLVVKVRAPMVNPTLGVHEADLLKTSGTLISFIYPAQNPELLNKLSQRKTTVLAMDQVPRVTIAQGYDALSSMANIAGYKAVVLAANHFGRFFTGQITAAGKVPPAKILIVGGGVAGLASAGAAKSMGAIVRGFDTRAAALEQFKSLGAEPLEVDLKESGEGQGGYAKEMSKEFIEAEMKLFAQQCKEVDILISTALIPGKKAPVLFNKEMIESMKEGSVVVDLAAEAGGNFETTKPGELYIHKGITHIGYTDLPSRMATQASTLYSNNITKLLKAISPDKDNFYFDVKDDFDFGTMGHVIRGTVVMKDGKVIFPAPTPKNIPQGAPVKQKTVAELEAEKAATITPFRKTMSTASAYTAGLTGILGLGIAAPNLAFSQMVTTFGLAGIVGYHTVWGVTPALHSPLMSVTNAISGLTAVGGLALMGGHLYPSTTSQGLAALAAFISSVNIAGGFLVTQRMLDMFKRPTDPPEYNYLYLLPAGTFVGGYLAALYSGYNIEQIMYLGSGLCCVGALAGLSTQGTARLGNALGMIGVAGGLAATLGVLKPGPELLAQMSGAMALGGTIGLTIAKRIQISDLPQLVAAFHSLVGLAAVLTCIAEYIIEYPHFATDAAANLTKIVAYLGTYIGGVTFSGSLIAYGKLQGLLKSAPLLLPGRHLLNAGLLAASVGGIIPFMVDPSFTTGITCLGSVSALSAVMGVTLTAAIGGADMPVVITVLNSYSGWALCAEGFLLNNNLLTIVGALIGSSGAILSYIMCVAMNRSLANVILGGYGTTSTAGGKPMEISGTHTEINLDNAIDMIREANSIIITPGYGLCAAKAQYPIADLVKMLTEQGKKVRFGIHPVAGRMPGQLNVLLAEAGVPYDIVLEMDEINHDFPDTDLVLVIGANDTVNSAAQEDPNSIIAGMPVLEVWKSKQVIVMKRSLGVGYAAVDNPIFYKPNTAMLLGDAKKTCDALQAKVRESYQK.

The N-terminal 43 residues, 1-43 (MANLLKTVVTGCSCPLLSNLGSCKGLRVKKDFLRTFYTHQELW), are a transit peptide targeting the mitochondrion. At 44–474 (CKAPVKPGIP…TITPFRKTMS (431 aa)) the chain is on the mitochondrial matrix side. Lys-70 carries the N6-acetyllysine modification. At Lys-117 the chain carries N6-succinyllysine. Position 182–184 (182–184 (RVT)) interacts with NAD(+). The residue at position 224 (Lys-224) is an N6-succinyllysine. NAD(+)-binding positions include Val-237, 257 to 259 (DTR), and Gly-287. Lys-294 carries the post-translational modification N6-succinyllysine. Residues Glu-300 and Leu-319 each contribute to the NAD(+) site. Lys-331 carries the post-translational modification N6-succinyllysine. Lys-397 carries the post-translational modification N6-acetyllysine. A run of 4 helical transmembrane segments spans residues 475-493 (TASA…GIAA), 501-521 (MVTT…GVTP), 527-546 (LMSV…LALM), and 558-578 (GLAA…FLVT). Residues 579–595 (QRMLDMFKRPTDPPEYN) lie on the Mitochondrial matrix side of the membrane. 5 helical membrane passes run 596–616 (YLYL…LYSG), 622–642 (IMYL…STQG), 646–666 (LGNA…LGVL), 672–691 (LLAQ…LTIA), and 702–722 (LVAA…IAEY). At 723-739 (IIEYPHFATDAAANLTK) the chain is on the cytoplasmic side. The next 5 membrane-spanning stretches (helical) occupy residues 740 to 760 (IVAY…LIAY), 778 to 797 (HLLN…PFMV), 801 to 819 (FTTG…AVMG), 833 to 853 (VVIT…GFLL), and 857 to 879 (LLTI…MCVA). The Mitochondrial matrix portion of the chain corresponds to 880-1086 (MNRSLANVIL…QAKVRESYQK (207 aa)). NADP(+) is bound by residues Tyr-933, 965-970 (VAGRMP), 1007-1011 (GANDT), 1026-1027 (GM), 1042-1049 (KRSLGVGY), and 1068-1069 (DA). Lys-1079 is modified (N6-succinyllysine).

This sequence in the N-terminal section; belongs to the AlaDH/PNT family. It in the C-terminal section; belongs to the PNT beta subunit family. Homodimer. In terms of tissue distribution, widely expressed with expression most readily detectable in adrenal, heart, kidney, thyroid and adipose tissues.

It localises to the mitochondrion inner membrane. The catalysed reaction is NAD(+) + NADPH + H(+)(in) = NADH + NADP(+) + H(+)(out). Functionally, the transhydrogenation between NADH and NADP is coupled to respiration and ATP hydrolysis and functions as a proton pump across the membrane. May play a role in reactive oxygen species (ROS) detoxification in the adrenal gland. The protein is NAD(P) transhydrogenase, mitochondrial (NNT) of Homo sapiens (Human).